Reading from the N-terminus, the 760-residue chain is 5-methyltetrahydropteroyltriglutamate--homocysteine methyltransferase (760 aa).

5-methyltetrahydropteroyltri-L-glutamate is bound by residues 17–20 (RELK) and lysine 118. Residues 436 to 438 (IGS) and glutamate 489 contribute to the L-homocysteine site. L-methionine contacts are provided by residues 436 to 438 (IGS) and glutamate 489. Residues 520 to 521 (RC) and tryptophan 566 each bind 5-methyltetrahydropteroyltri-L-glutamate. Aspartate 604 contributes to the L-homocysteine binding site. An L-methionine-binding site is contributed by aspartate 604. Glutamate 610 is a 5-methyltetrahydropteroyltri-L-glutamate binding site. Zn(2+) is bound by residues histidine 646, cysteine 648, and glutamate 670. Catalysis depends on histidine 699, which acts as the Proton donor. Cysteine 731 serves as a coordination point for Zn(2+).

Belongs to the vitamin-B12 independent methionine synthase family. Zn(2+) serves as cofactor.

It catalyses the reaction 5-methyltetrahydropteroyltri-L-glutamate + L-homocysteine = tetrahydropteroyltri-L-glutamate + L-methionine. The protein operates within amino-acid biosynthesis; L-methionine biosynthesis via de novo pathway; L-methionine from L-homocysteine (MetE route): step 1/1. Catalyzes the transfer of a methyl group from 5-methyltetrahydrofolate to homocysteine resulting in methionine formation. This Vibrio harveyi (Beneckea harveyi) protein is 5-methyltetrahydropteroyltriglutamate--homocysteine methyltransferase.